We begin with the raw amino-acid sequence, 397 residues long: Succinate--CoA ligase [ADP-forming] subunit beta (397 aa).

Residues 9–254 (KALLKSFGAP…KSEEDEKEIQ (246 aa)) form the ATP-grasp domain. ATP-binding positions include K46, 53-55 (GRG), E109, A112, and E117. The Mg(2+) site is built by N209 and D223. Residues N274 and 331–333 (GIM) each bind substrate.

This sequence belongs to the succinate/malate CoA ligase beta subunit family. In terms of assembly, heterotetramer of two alpha and two beta subunits. Mg(2+) serves as cofactor.

The enzyme catalyses succinate + ATP + CoA = succinyl-CoA + ADP + phosphate. It catalyses the reaction GTP + succinate + CoA = succinyl-CoA + GDP + phosphate. It participates in carbohydrate metabolism; tricarboxylic acid cycle; succinate from succinyl-CoA (ligase route): step 1/1. Its function is as follows. Succinyl-CoA synthetase functions in the citric acid cycle (TCA), coupling the hydrolysis of succinyl-CoA to the synthesis of either ATP or GTP and thus represents the only step of substrate-level phosphorylation in the TCA. The beta subunit provides nucleotide specificity of the enzyme and binds the substrate succinate, while the binding sites for coenzyme A and phosphate are found in the alpha subunit. In Rhizobium rhizogenes (strain K84 / ATCC BAA-868) (Agrobacterium radiobacter), this protein is Succinate--CoA ligase [ADP-forming] subunit beta.